The sequence spans 445 residues: Argininosuccinate synthase (445 aa).

Residues alanine 17–serine 25 and alanine 43 each bind ATP. L-citrulline is bound at residue tyrosine 99. ATP-binding residues include glycine 129 and threonine 131. L-aspartate-binding residues include threonine 131, asparagine 135, and aspartate 136. Asparagine 135 contributes to the L-citrulline binding site. Aspartate 136 provides a ligand contact to ATP. Residues arginine 139 and serine 192 each contribute to the L-citrulline site. Residue aspartate 194 coordinates ATP. Residues threonine 201, glutamate 203, and glutamate 280 each contribute to the L-citrulline site.

The protein belongs to the argininosuccinate synthase family. Type 2 subfamily. Homotetramer.

The protein localises to the cytoplasm. It catalyses the reaction L-citrulline + L-aspartate + ATP = 2-(N(omega)-L-arginino)succinate + AMP + diphosphate + H(+). It participates in amino-acid biosynthesis; L-arginine biosynthesis; L-arginine from L-ornithine and carbamoyl phosphate: step 2/3. The protein is Argininosuccinate synthase of Bordetella bronchiseptica (strain ATCC BAA-588 / NCTC 13252 / RB50) (Alcaligenes bronchisepticus).